A 60-amino-acid polypeptide reads, in one-letter code: Adenylate kinase isoenzyme 1 (60 aa).

9-14 contributes to the ATP binding site; the sequence is GSGKGT. A Phosphoserine modification is found at S25. An NMP region spans residues 25–53; that stretch reads STGDLLRVDSSNGFLIDGYPRQGEEFERK. T26 and R31 together coordinate AMP.

This sequence belongs to the adenylate kinase family. AK1 subfamily. In terms of assembly, monomer. The cofactor is Mg(2+).

Its subcellular location is the cytoplasm. The enzyme catalyses a ribonucleoside 5'-phosphate + ATP = a ribonucleoside 5'-diphosphate + ADP. The catalysed reaction is AMP + ATP = 2 ADP. It carries out the reaction dAMP + ATP = dADP + ADP. It catalyses the reaction dATP + AMP = dADP + ADP. The enzyme catalyses dAMP + dATP = 2 dADP. The catalysed reaction is a 2'-deoxyribonucleoside 5'-diphosphate + ATP = a 2'-deoxyribonucleoside 5'-triphosphate + ADP. It carries out the reaction a ribonucleoside 5'-diphosphate + ATP = a ribonucleoside 5'-triphosphate + ADP. It catalyses the reaction CDP + GTP = CTP + GDP. The enzyme catalyses GDP + ATP = GTP + ADP. The catalysed reaction is UDP + ATP = UTP + ADP. It carries out the reaction GTP + UDP = UTP + GDP. It catalyses the reaction dTDP + GTP = dTTP + GDP. The enzyme catalyses dCDP + GTP = dCTP + GDP. The catalysed reaction is dGDP + ATP = dGTP + ADP. It carries out the reaction dADP + GTP = dATP + GDP. It catalyses the reaction thiamine diphosphate + ADP = thiamine triphosphate + AMP. Functionally, catalyzes the reversible transfer of the terminal phosphate group between ATP and AMP. Also displays broad nucleoside diphosphate kinase activity. Plays an important role in cellular energy homeostasis and in adenine nucleotide metabolism. Also catalyzes at a very low rate the synthesis of thiamine triphosphate (ThTP) from thiamine diphosphate (ThDP) and ADP. The chain is Adenylate kinase isoenzyme 1 (Ak1) from Mesocricetus auratus (Golden hamster).